The sequence spans 136 residues: Nucleoside diphosphate kinase (136 aa).

ATP is bound by residues K10, F58, R86, T92, R104, and N114. The active-site Pros-phosphohistidine intermediate is H117.

The protein belongs to the NDK family. Homotetramer. Mg(2+) is required as a cofactor.

The protein resides in the cytoplasm. It carries out the reaction a 2'-deoxyribonucleoside 5'-diphosphate + ATP = a 2'-deoxyribonucleoside 5'-triphosphate + ADP. It catalyses the reaction a ribonucleoside 5'-diphosphate + ATP = a ribonucleoside 5'-triphosphate + ADP. Its function is as follows. Major role in the synthesis of nucleoside triphosphates other than ATP. The ATP gamma phosphate is transferred to the NDP beta phosphate via a ping-pong mechanism, using a phosphorylated active-site intermediate. This Mycolicibacterium paratuberculosis (strain ATCC BAA-968 / K-10) (Mycobacterium paratuberculosis) protein is Nucleoside diphosphate kinase.